Consider the following 176-residue polypeptide: NAD(P)H-quinone oxidoreductase subunit 6, chloroplastic (176 aa).

Helical transmembrane passes span 10-30, 32-52, 61-81, 92-112, and 152-172; these read FLLV…VLLP, PIFS…LYIL, AQLL…VMFM, LWTV…FLLM, and FFLP…GAIS.

Belongs to the complex I subunit 6 family. As to quaternary structure, NDH is composed of at least 16 different subunits, 5 of which are encoded in the nucleus.

The protein resides in the plastid. Its subcellular location is the chloroplast thylakoid membrane. The catalysed reaction is a plastoquinone + NADH + (n+1) H(+)(in) = a plastoquinol + NAD(+) + n H(+)(out). It catalyses the reaction a plastoquinone + NADPH + (n+1) H(+)(in) = a plastoquinol + NADP(+) + n H(+)(out). Its function is as follows. NDH shuttles electrons from NAD(P)H:plastoquinone, via FMN and iron-sulfur (Fe-S) centers, to quinones in the photosynthetic chain and possibly in a chloroplast respiratory chain. The immediate electron acceptor for the enzyme in this species is believed to be plastoquinone. Couples the redox reaction to proton translocation, and thus conserves the redox energy in a proton gradient. In Olimarabidopsis pumila (Dwarf rocket), this protein is NAD(P)H-quinone oxidoreductase subunit 6, chloroplastic (ndhG).